The sequence spans 142 residues: Large ribosomal subunit protein bL17 (142 aa).

It belongs to the bacterial ribosomal protein bL17 family. As to quaternary structure, part of the 50S ribosomal subunit. Contacts protein L32.

The sequence is that of Large ribosomal subunit protein bL17 from Methylocella silvestris (strain DSM 15510 / CIP 108128 / LMG 27833 / NCIMB 13906 / BL2).